The sequence spans 70 residues: Conotoxin TsMLKM-011 (70 aa).

Residues 1 to 24 (MLKMGVVLFVFLVLFPLATLQLDA) form the signal peptide. Residues 25 to 54 (DQPVERYAENKQLVSPYERRQIILHALGQR) constitute a propeptide that is removed on maturation. 3 disulfide bridges follow: C56–C66, C57–C68, and C62–C69.

It belongs to the conotoxin M superfamily. Expressed by the venom duct.

The protein localises to the secreted. The sequence is that of Conotoxin TsMLKM-011 from Conus tessulatus (Tessellate cone).